The primary structure comprises 357 residues: Putative F-box/kelch-repeat protein At5g38680 (357 aa).

The region spanning 14-61 (NSNPSLPDALIISCIARVSRLYYPILSFVSKSFRSLLASPELYKERSL) is the F-box domain. 4 Kelch repeats span residues 131-175 (NIYN…VLDG), 177-224 (IYVA…SKSL), 226-267 (IDEK…YCEI), and 268-313 (ENVL…GGKK).

This Arabidopsis thaliana (Mouse-ear cress) protein is Putative F-box/kelch-repeat protein At5g38680.